Here is a 307-residue protein sequence, read N- to C-terminus: Sporulation sigma-E factor-processing peptidase (307 aa).

The next 5 membrane-spanning stretches (helical) occupy residues 7–27, 36–56, 57–77, 89–109, and 127–147; these read LIWM…AVVL, LLLG…PFSH, LMVH…MTFG, LTFY…HFLF, and FGDP…SYFS. Residue D183 is part of the active site.

This sequence belongs to the peptidase U4 family. Self-associates. Interacts with SigE. Interacts with SpoIIR.

It is found in the cell membrane. In terms of biological role, probable aspartic protease that is responsible for the proteolytic cleavage of the RNA polymerase sigma E factor (SigE/spoIIGB) to yield the active peptide in the mother cell during sporulation. Responds to a signal from the forespore that is triggered by the extracellular signal protein SpoIIR. This chain is Sporulation sigma-E factor-processing peptidase, found in Priestia megaterium (strain ATCC 12872 / QMB1551) (Bacillus megaterium).